A 227-amino-acid polypeptide reads, in one-letter code: Large ribosomal subunit protein uL3 (227 aa).

It belongs to the universal ribosomal protein uL3 family. As to quaternary structure, part of the 50S ribosomal subunit. Forms a cluster with proteins L14 and L19.

Its function is as follows. One of the primary rRNA binding proteins, it binds directly near the 3'-end of the 23S rRNA, where it nucleates assembly of the 50S subunit. The chain is Large ribosomal subunit protein uL3 from Persephonella marina (strain DSM 14350 / EX-H1).